We begin with the raw amino-acid sequence, 158 residues long: Large ribosomal subunit protein uL16 (158 aa).

The protein belongs to the universal ribosomal protein uL16 family. As to quaternary structure, part of the 50S ribosomal subunit.

In terms of biological role, binds 23S rRNA and is also seen to make contacts with the A and possibly P site tRNAs. The polypeptide is Large ribosomal subunit protein uL16 (Synechococcus sp. (strain CC9605)).